Consider the following 403-residue polypeptide: Large ribosomal subunit protein uL3 (403 aa).

The disordered stretch occupies residues 1 to 37; sequence MSHRKFSAPRHGSLGFLPRKRSSRHRGKVKSFPKDDP. A Phosphoserine modification is found at Ser13. Positions 18–31 are enriched in basic residues; the sequence is PRKRSSRHRGKVKS. A Glycyl lysine isopeptide (Lys-Gly) (interchain with G-Cter in SUMO2) cross-link involves residue Lys39. At Lys136 the chain carries N6-acetyllysine. Glycyl lysine isopeptide (Lys-Gly) (interchain with G-Cter in SUMO2) cross-links involve residues Lys224 and Lys226. Tele-methylhistidine is present on His245. An N6-acetyllysine; alternate mark is found at Lys286 and Lys294. Residue Lys286 forms a Glycyl lysine isopeptide (Lys-Gly) (interchain with G-Cter in SUMO2); alternate linkage. Residue Lys294 forms a Glycyl lysine isopeptide (Lys-Gly) (interchain with G-Cter in SUMO1); alternate linkage. Ser304 carries the post-translational modification Phosphoserine. Position 366 is an N6-acetyllysine; alternate (Lys366). Lys366 participates in a covalent cross-link: Glycyl lysine isopeptide (Lys-Gly) (interchain with G-Cter in SUMO2); alternate. Lys373 is modified (N6-acetyllysine). Residues Lys386, Lys393, and Lys399 each participate in a glycyl lysine isopeptide (Lys-Gly) (interchain with G-Cter in SUMO2) cross-link.

The protein belongs to the universal ribosomal protein uL3 family. Component of the large ribosomal subunit. Interacts with DHX33. In terms of processing, constitutively monomethylated at His-245 by METTL18. Methylation at His-245 regulates translation elongation by slowing ribosome traversal on tyrosine codons: slower elongation provides enough time for proper folding of synthesized proteins and prevents cellular aggregation of tyrosine-rich proteins. It is not required for incorporation of RPL3 into ribosomes.

The protein localises to the nucleus. Its subcellular location is the nucleolus. It localises to the cytoplasm. Component of the large ribosomal subunit. The ribosome is a large ribonucleoprotein complex responsible for the synthesis of proteins in the cell. The protein is Large ribosomal subunit protein uL3 (RPL3) of Homo sapiens (Human).